A 1178-amino-acid polypeptide reads, in one-letter code: MFELNNFDALQIGLASPEKIREWSRGEVKKPETINYRTLKPERDGLFCERIFGPMKDWECHCGKYKRIRYKGIVCDRCGVEVTKAKVRRERMGHIELAAPVSHIWYFKGIPSRMGLILDMSPRALEKVLYFASYVVLDPKETPLLKKQLLNEKEYRESIDKYGDDSFVAAMGAEAVKTLLDEIDLEQSSIELKEELKTSTGQKKIRIIRRLEVVESFRKSGNRPDWMVIDVIPVIPPDLRPMVQLDGGRFATSDLNDLYRRVINRNNRLKKLLDLGAPDIIVRNEKRMLQEAVDALIDNGRRGRPVTGPGNRPLKSLSDMLKGKQGRFRQNLLGKRVDYSGRSVIVVGPELKMYQCGLPKEMALELFKPFVMKKLVQNGLAHNIKSAKRMVERVQPQVWDVLEEVISDHPVLLNRAPTLHRLGIQAFQPVLVEGRAIKLHPLVCTAYNADFDGDQMAVHVPLSVEAQAEARFLMLAAHNILKPSDGKPVSVPTQDMVLGSYYLTMDKDGVKGEGKVFSCPEEVLMAYQCKAVDIHAKIKVRLKKVIDGETIERIIETTPGKIIFNESIPQDLGYIDRTVPENKLKLEVDFLVSKKTLGGIINRCYMKHGATKTSIMLDKIKAKGYHYSTIGAITISTSDMVVPEAKRELLQNTEKQVEKIQKMYRRGFISEEERYEKVIDLWTKTTEDVANALMGSLDSFNPIYMMADSGARGSKSQIKQLAGMRGLMANPSGKIIELPIKASFREGLDVLEYFISTHGARKGNADTALKTADSGYLTRRLVDVSQDVIVRQEDCGTEEGYEVSEIKEGNEVIEPLVERLSGRYPSEDIIHPTTGEVIVKRNTYMNEDIAKKVSDAGIKKVKIRSVFTCKSKHGVCARCYGMNMATSQKIHIGEAVGIVAAQSIGEPGTQLTMRTFHTGGVAGADITQGLPRVEELFEARKPKGLAIVSEVSGTVKMEETKKKRTIIVVTDDGEEVSYDIPFGSRIKVKNGDIISAGDEITEGSINPHDILRIKGVDGVKNYLLSEVQKVYRLQGVDINDKHLEVVIRQMTRKIKIEDSGDTELLPGTMIDVFDFEEANREILEKGGEPAVGRIALLGITKAALATDSFLSAASFQETTRVLTDAAIKGKIDPLLGLKENVIIGKLIPAGTGMTRYRSIQINTDDENIEEDSMDSIEV.

Residues cysteine 60, cysteine 62, cysteine 75, and cysteine 78 each coordinate Zn(2+). Aspartate 450, aspartate 452, and aspartate 454 together coordinate Mg(2+). 4 residues coordinate Zn(2+): cysteine 795, cysteine 869, cysteine 876, and cysteine 879.

This sequence belongs to the RNA polymerase beta' chain family. As to quaternary structure, the RNAP catalytic core consists of 2 alpha, 1 beta, 1 beta' and 1 omega subunit. When a sigma factor is associated with the core the holoenzyme is formed, which can initiate transcription. It depends on Mg(2+) as a cofactor. Zn(2+) serves as cofactor.

The enzyme catalyses RNA(n) + a ribonucleoside 5'-triphosphate = RNA(n+1) + diphosphate. In terms of biological role, DNA-dependent RNA polymerase catalyzes the transcription of DNA into RNA using the four ribonucleoside triphosphates as substrates. The protein is DNA-directed RNA polymerase subunit beta' of Clostridium botulinum (strain Okra / Type B1).